The sequence spans 488 residues: Cobyric acid synthase (488 aa).

The region spanning 250-438 (DITIAIIRLP…LHGIFDNGSW (189 aa)) is the GATase cobBQ-type domain. Residue Cys331 is the Nucleophile of the active site. The active site involves His430.

This sequence belongs to the CobB/CobQ family. CobQ subfamily.

The protein operates within cofactor biosynthesis; adenosylcobalamin biosynthesis. Catalyzes amidations at positions B, D, E, and G on adenosylcobyrinic A,C-diamide. NH(2) groups are provided by glutamine, and one molecule of ATP is hydrogenolyzed for each amidation. The sequence is that of Cobyric acid synthase from Trichodesmium erythraeum (strain IMS101).